A 308-amino-acid polypeptide reads, in one-letter code: Acetaldehyde dehydrogenase 2 (308 aa).

9–12 serves as a coordination point for NAD(+); it reads SGNI. The Acyl-thioester intermediate role is filled by C127. Residues 158–166 and N286 each bind NAD(+); that span reads SAGPGTRAN.

Belongs to the acetaldehyde dehydrogenase family.

It catalyses the reaction acetaldehyde + NAD(+) + CoA = acetyl-CoA + NADH + H(+). This is Acetaldehyde dehydrogenase 2 from Parafrankia sp. (strain EAN1pec).